A 254-amino-acid chain; its full sequence is Leucyl/phenylalanyl-tRNA--protein transferase (254 aa).

It belongs to the L/F-transferase family.

It is found in the cytoplasm. The catalysed reaction is N-terminal L-lysyl-[protein] + L-leucyl-tRNA(Leu) = N-terminal L-leucyl-L-lysyl-[protein] + tRNA(Leu) + H(+). The enzyme catalyses N-terminal L-arginyl-[protein] + L-leucyl-tRNA(Leu) = N-terminal L-leucyl-L-arginyl-[protein] + tRNA(Leu) + H(+). It catalyses the reaction L-phenylalanyl-tRNA(Phe) + an N-terminal L-alpha-aminoacyl-[protein] = an N-terminal L-phenylalanyl-L-alpha-aminoacyl-[protein] + tRNA(Phe). Functions in the N-end rule pathway of protein degradation where it conjugates Leu, Phe and, less efficiently, Met from aminoacyl-tRNAs to the N-termini of proteins containing an N-terminal arginine or lysine. The protein is Leucyl/phenylalanyl-tRNA--protein transferase of Burkholderia ambifaria (strain MC40-6).